The chain runs to 783 residues: MSQIPVADLTEAQAVEDLERLADLLATHDIAYHQEDNPTVSDAEYDALKRRNLDIETRFPHLVRDNSPSMRVGATRAEQFAPVEHGVPMLSLDNAFSNDEAIEFDARVRRFLRISPSETVAYTAEPKIDGLSASLRYEKGVLVQGATRGDGRVGEDVTANLRTIADIPHRLKGSGWPDVIEVRGEVYVELAAFAAFNKAAEEAGQRTYANPRNFAAGSLRQIDPKISAQRPLRFFGYAWGLVSEGFADSQWGALERLAEWGFVTTAPPAQRVLNAQGLLDIYAQFEVLRPTLGFDIDGVVYKVDDLELQRRLGFVSRSPRWAIARKFPAQRARTVLEAIDLQVGRTGAITPVARLKPVTVGGVSVTNATLHNGDEIARLDVRVGDTVVIQRAGDVIPQIVEVALDARPDPAPPPYEFPHVCPCPLQTPLAREVTASGQESVVRRCTGEFACPFQRVEHLRHFVSRRAFDIEGLGEKQLQAFFEEGWITEPADIFKLARDAEKLAVLREREGYGETSVANLVKGIEARRTIGMDRMIYGLGARDIGETTSTVLARNFDRFEDLQAAAEAAARALPGETYLELSTAPGVGPKALDMLVEAGKGGVVADPWPQTDDLELKIGHAVPKLTKPARAALAQRYGTWDAFADGLVAAASGAPGDDYLHLAAIDGVGPVAAQSLARFFAEDHNRQKVANLVAELDIQPVAKPKTDTAVAGKTIVFTGSLEKMTRDEAKAQAEGLGAKVASSVSKKTDLVVAGPGAGSKLKTATDLGIQVMTEDEWLELVAG.

Residues 42–46, 91–92, and glutamate 125 contribute to the NAD(+) site; these read DAEYD and SL. The active-site N6-AMP-lysine intermediate is lysine 127. 4 residues coordinate NAD(+): arginine 148, glutamate 185, lysine 302, and lysine 326. Zn(2+)-binding residues include cysteine 421, cysteine 423, cysteine 445, and cysteine 451. The region spanning 705–783 is the BRCT domain; the sequence is KTDTAVAGKT…EDEWLELVAG (79 aa).

This sequence belongs to the NAD-dependent DNA ligase family. LigA subfamily. It depends on Mg(2+) as a cofactor. Mn(2+) serves as cofactor.

The catalysed reaction is NAD(+) + (deoxyribonucleotide)n-3'-hydroxyl + 5'-phospho-(deoxyribonucleotide)m = (deoxyribonucleotide)n+m + AMP + beta-nicotinamide D-nucleotide.. Its function is as follows. DNA ligase that catalyzes the formation of phosphodiester linkages between 5'-phosphoryl and 3'-hydroxyl groups in double-stranded DNA using NAD as a coenzyme and as the energy source for the reaction. It is essential for DNA replication and repair of damaged DNA. This is DNA ligase from Caulobacter vibrioides (strain ATCC 19089 / CIP 103742 / CB 15) (Caulobacter crescentus).